The following is a 414-amino-acid chain: Serine hydroxymethyltransferase (414 aa).

Residues leucine 117 and 121–123 each bind (6S)-5,6,7,8-tetrahydrofolate; that span reads GHL. An N6-(pyridoxal phosphate)lysine modification is found at lysine 226.

The protein belongs to the SHMT family. As to quaternary structure, homodimer. Pyridoxal 5'-phosphate is required as a cofactor.

The protein localises to the cytoplasm. It carries out the reaction (6R)-5,10-methylene-5,6,7,8-tetrahydrofolate + glycine + H2O = (6S)-5,6,7,8-tetrahydrofolate + L-serine. It participates in one-carbon metabolism; tetrahydrofolate interconversion. The protein operates within amino-acid biosynthesis; glycine biosynthesis; glycine from L-serine: step 1/1. Its function is as follows. Catalyzes the reversible interconversion of serine and glycine with tetrahydrofolate (THF) serving as the one-carbon carrier. This reaction serves as the major source of one-carbon groups required for the biosynthesis of purines, thymidylate, methionine, and other important biomolecules. Also exhibits THF-independent aldolase activity toward beta-hydroxyamino acids, producing glycine and aldehydes, via a retro-aldol mechanism. This chain is Serine hydroxymethyltransferase, found in Dictyoglomus thermophilum (strain ATCC 35947 / DSM 3960 / H-6-12).